Reading from the N-terminus, the 268-residue chain is Indole-3-glycerol phosphate synthase (268 aa).

Belongs to the TrpC family.

The catalysed reaction is 1-(2-carboxyphenylamino)-1-deoxy-D-ribulose 5-phosphate + H(+) = (1S,2R)-1-C-(indol-3-yl)glycerol 3-phosphate + CO2 + H2O. Its pathway is amino-acid biosynthesis; L-tryptophan biosynthesis; L-tryptophan from chorismate: step 4/5. The polypeptide is Indole-3-glycerol phosphate synthase (Lachnospira eligens (strain ATCC 27750 / DSM 3376 / VPI C15-48 / C15-B4) (Eubacterium eligens)).